A 235-amino-acid chain; its full sequence is Deoxyribose-phosphate aldolase (235 aa).

The active-site Proton donor/acceptor is Asp-107. The active-site Schiff-base intermediate with acetaldehyde is the Lys-167. Lys-197 acts as the Proton donor/acceptor in catalysis.

This sequence belongs to the DeoC/FbaB aldolase family. DeoC type 1 subfamily. In terms of assembly, homotetramer.

Its subcellular location is the cytoplasm. The catalysed reaction is 2-deoxy-D-ribose 5-phosphate = D-glyceraldehyde 3-phosphate + acetaldehyde. It participates in carbohydrate degradation; 2-deoxy-D-ribose 1-phosphate degradation; D-glyceraldehyde 3-phosphate and acetaldehyde from 2-deoxy-alpha-D-ribose 1-phosphate: step 2/2. In terms of biological role, catalyzes a reversible aldol reaction between acetaldehyde and D-glyceraldehyde 3-phosphate to generate 2-deoxy-D-ribose 5-phosphate. The sequence is that of Deoxyribose-phosphate aldolase from Aeropyrum pernix (strain ATCC 700893 / DSM 11879 / JCM 9820 / NBRC 100138 / K1).